We begin with the raw amino-acid sequence, 236 residues long: Orotidine 5'-phosphate decarboxylase (236 aa).

Substrate is bound by residues Asp16, Lys38, 65 to 74 (DLKLHDIGNT), Thr123, Arg184, Gln193, Gly213, and Arg214. The active-site Proton donor is the Lys67.

The protein belongs to the OMP decarboxylase family. Type 1 subfamily. In terms of assembly, homodimer.

The catalysed reaction is orotidine 5'-phosphate + H(+) = UMP + CO2. Its pathway is pyrimidine metabolism; UMP biosynthesis via de novo pathway; UMP from orotate: step 2/2. Functionally, catalyzes the decarboxylation of orotidine 5'-monophosphate (OMP) to uridine 5'-monophosphate (UMP). The polypeptide is Orotidine 5'-phosphate decarboxylase (Methylobacterium sp. (strain 4-46)).